The chain runs to 447 residues: Cytochrome c biogenesis protein CcsB (447 aa).

The next 3 membrane-spanning stretches (helical) occupy residues 28 to 48 (LRLA…GTVI), 87 to 107 (TWWY…CTFR), and 173 to 193 (IGPI…IWGA).

This sequence belongs to the Ccs1/CcsB family. In terms of assembly, may interact with CcsA.

Its subcellular location is the cellular thylakoid membrane. Functionally, required during biogenesis of c-type cytochromes (cytochrome c6 and cytochrome f) at the step of heme attachment. This is Cytochrome c biogenesis protein CcsB from Microcystis aeruginosa (strain NIES-843 / IAM M-2473).